We begin with the raw amino-acid sequence, 876 residues long: Probable galactinol--sucrose galactosyltransferase 4 (876 aa).

Phosphoserine occurs at positions 7 and 9.

Belongs to the glycosyl hydrolases 36 family.

The catalysed reaction is alpha-D-galactosyl-(1-&gt;3)-1D-myo-inositol + sucrose = raffinose + myo-inositol. Functionally, transglycosidase operating by a ping-pong reaction mechanism. Involved in the synthesis of raffinose, a major soluble carbohydrate in seeds, roots and tubers. The protein is Probable galactinol--sucrose galactosyltransferase 4 (RFS4) of Arabidopsis thaliana (Mouse-ear cress).